A 177-amino-acid chain; its full sequence is Flavodoxin (177 aa).

The 170-residue stretch at 4-173 (IGIFFGSDTG…RIDTWLDKLK (170 aa)) folds into the Flavodoxin-like domain.

The protein belongs to the flavodoxin family. The cofactor is FMN.

Its function is as follows. Low-potential electron donor to a number of redox enzymes. NifF is the electron donor to nitrogenase. The polypeptide is Flavodoxin (nifF) (Enterobacter agglomerans (Erwinia herbicola)).